Here is a 242-residue protein sequence, read N- to C-terminus: Cysteine-rich venom protein VAR11 (242 aa).

Residues 1–19 (MILLKLYLTLAAILCQSRG) form the signal peptide. In terms of domain architecture, SCP spans 41–169 (NKHNDLRRTV…SLKYFQVCQY (129 aa)). Cystine bridges form between C77-C156, C95-C170, C151-C167, C189-C196, C192-C201, C205-C237, C214-C231, and C223-C235. Positions 205 to 237 (CAYNDDYTSCPDLTKQVGCNHPVTANCKASCQC) constitute a ShKT domain.

The protein belongs to the CRISP family. As to expression, expressed by the venom gland.

It localises to the secreted. Blocks ryanodine receptors, and potassium channels. In Varanus varius (Lace monitor lizard), this protein is Cysteine-rich venom protein VAR11.